A 319-amino-acid polypeptide reads, in one-letter code: Phosphate acyltransferase (319 aa).

The protein belongs to the PlsX family. In terms of assembly, homodimer. Probably interacts with PlsY.

It localises to the cytoplasm. The enzyme catalyses a fatty acyl-[ACP] + phosphate = an acyl phosphate + holo-[ACP]. It participates in lipid metabolism; phospholipid metabolism. Its function is as follows. Catalyzes the reversible formation of acyl-phosphate (acyl-PO(4)) from acyl-[acyl-carrier-protein] (acyl-ACP). This enzyme utilizes acyl-ACP as fatty acyl donor, but not acyl-CoA. The sequence is that of Phosphate acyltransferase from Chlamydia muridarum (strain MoPn / Nigg).